The sequence spans 249 residues: Uridylate kinase (249 aa).

22 to 25 (KISG) serves as a coordination point for ATP. An involved in allosteric activation by GTP region spans residues 30-35 (GTQGFG). Residue Gly-64 coordinates UMP. The ATP site is built by Gly-65 and Arg-69. Residues Asp-84 and 145–152 (TGNPYFTT) contribute to the UMP site. Positions 173, 179, and 182 each coordinate ATP.

It belongs to the UMP kinase family. As to quaternary structure, homohexamer.

Its subcellular location is the cytoplasm. The enzyme catalyses UMP + ATP = UDP + ADP. The protein operates within pyrimidine metabolism; CTP biosynthesis via de novo pathway; UDP from UMP (UMPK route): step 1/1. Allosterically activated by GTP. Inhibited by UTP. Functionally, catalyzes the reversible phosphorylation of UMP to UDP. This is Uridylate kinase from Ruegeria sp. (strain TM1040) (Silicibacter sp.).